The primary structure comprises 216 residues: ADP-sugar pyrophosphatase (216 aa).

The residue at position 1 (methionine 1) is an N-acetylmethionine. Phosphoserine occurs at positions 3 and 10. Tryptophan 28 contributes to the substrate binding site. Lysine 42 participates in a covalent cross-link: Glycyl lysine isopeptide (Lys-Gly) (interchain with G-Cter in SUMO2). Threonine 45 is modified (phosphothreonine). Residues 46–47 (WE) and arginine 51 each bind substrate. A Nudix hydrolase domain is found at 57–194 (QTADGVAVIP…EEHLTVDARV (138 aa)). Tyrosine 74 carries the post-translational modification Phosphotyrosine. A substrate-binding site is contributed by arginine 84. Residue alanine 96 participates in Mg(2+) binding. The Nudix box motif lies at 97-118 (GLIDDGETPEAAALRELEEETG). A substrate-binding site is contributed by leucine 98. Residues glutamate 112 and glutamate 116 each coordinate Mg(2+). Residue aspartate 133 participates in substrate binding. Glutamate 163 lines the Mg(2+) pocket. N6-acetyllysine is present on residues lysine 207 and lysine 215.

It belongs to the Nudix hydrolase family. As to quaternary structure, homodimer. Interacts with PARG. Mg(2+) serves as cofactor. Post-translationally, phosphorylation at Thr-45 is required for homodimer stability; dephosphorylation results in destabilization of the homodimer. Dephosphorylation at Thr-45 promotes the ATP-synthesis activity.

The protein localises to the nucleus. It catalyses the reaction D-ribose 5-phosphate + ATP + H(+) = ADP-D-ribose + diphosphate. The catalysed reaction is ADP-D-ribose + H2O = D-ribose 5-phosphate + AMP + 2 H(+). It carries out the reaction 8-oxo-dGDP + H2O = 8-oxo-dGMP + phosphate + H(+). Functionally, enzyme that can either act as an ADP-sugar pyrophosphatase in absence of diphosphate or catalyze the synthesis of ATP in presence of diphosphate. In absence of diphosphate, hydrolyzes with similar activities various modified nucleoside diphosphates such as ADP-ribose, ADP-mannose, ADP-glucose, 8-oxo-GDP and 8-oxo-dGDP. Can also hydrolyze other nucleotide sugars with low activity. In presence of diphosphate, mediates the synthesis of ATP in the nucleus by catalyzing the conversion of ADP-ribose to ATP and ribose 5-phosphate. Nuclear ATP synthesis takes place when dephosphorylated at Thr-45. Nuclear ATP generation is required for extensive chromatin remodeling events that are energy-consuming. Does not play a role in U8 snoRNA decapping activity. Binds U8 snoRNA. The chain is ADP-sugar pyrophosphatase from Pongo abelii (Sumatran orangutan).